A 370-amino-acid chain; its full sequence is Platelet-derived growth factor D (370 aa).

The signal sequence occupies residues 1-18 (MHRLIFVCTLVCANFCSC). The CUB domain occupies 52–170 (RDETIQVRGN…PGFKIYYSLL (119 aa)). Cysteine 109 and cysteine 131 are oxidised to a cystine. N-linked (GlcNAc...) asparagine glycosylation is present at asparagine 276. Disulfide bonds link cysteine 302–cysteine 360 and cysteine 306–cysteine 362.

Belongs to the PDGF/VEGF growth factor family. In terms of assembly, homodimer; disulfide-linked. Interacts with PDGFRB homodimers, and with heterodimers formed by PDGFRA and PDGFRB. Post-translationally, activated by proteolytic cleavage. Proteolytic removal of the N-terminal CUB domain releasing the core domain is necessary for unmasking the receptor-binding epitopes of the core domain. Cleavage after Arg-247 or Arg-249 by urokinase plasminogen activator gives rise to the active form.

Its subcellular location is the secreted. Functionally, growth factor that plays an essential role in the regulation of embryonic development, cell proliferation, cell migration, survival and chemotaxis. Potent mitogen for cells of mesenchymal origin. Plays an important role in wound healing. Induces macrophage recruitment, increased interstitial pressure, and blood vessel maturation during angiogenesis. Can initiate events that lead to a mesangial proliferative glomerulonephritis, including influx of monocytes and macrophages and production of extracellular matrix. The polypeptide is Platelet-derived growth factor D (PDGFD) (Pongo abelii (Sumatran orangutan)).